A 128-amino-acid chain; its full sequence is MARIAGVDLPRDKRIEYALTLIYGIGWTTARKILERTGIDPWTKVRDLTDDEVQRLRDIIEKEMVVEGDLRRQVAMNIKRLIDIGCYRGLRHRMGLPVRGQRTRTNARTRKGPRPRIGVKKKGKQAGS.

Residues 98–128 (VRGQRTRTNARTRKGPRPRIGVKKKGKQAGS) are disordered. The segment covering 101 to 128 (QRTRTNARTRKGPRPRIGVKKKGKQAGS) has biased composition (basic residues).

This sequence belongs to the universal ribosomal protein uS13 family. In terms of assembly, part of the 30S ribosomal subunit. Forms a loose heterodimer with protein S19. Forms two bridges to the 50S subunit in the 70S ribosome.

Its function is as follows. Located at the top of the head of the 30S subunit, it contacts several helices of the 16S rRNA. In the 70S ribosome it contacts the 23S rRNA (bridge B1a) and protein L5 of the 50S subunit (bridge B1b), connecting the 2 subunits; these bridges are implicated in subunit movement. Contacts the tRNAs in the A and P-sites. The sequence is that of Small ribosomal subunit protein uS13 from Thermomicrobium roseum (strain ATCC 27502 / DSM 5159 / P-2).